Reading from the N-terminus, the 744-residue chain is Putative pre-mRNA-splicing factor ATP-dependent RNA helicase DHX32 (744 aa).

N-acetylmethionine is present on M1. A disordered region spans residues 1 to 28; that stretch reads MDEEELDHPNASPEKRYFPESLDSSDGD. The Helicase ATP-binding domain occupies 72-270; that stretch reads MESLLQNQVV…RLIFEIHRSG (199 aa). 85–92 is an ATP binding site; the sequence is GDSKCGKS. Positions 185–188 match the DEAH box motif; the sequence is DDVH. Residues 258–438 form the Helicase C-terminal domain; sequence SVIRLIFEIH…SMVLFMKRVD (181 aa).

The protein belongs to the DEAD box helicase family. DEAH subfamily.

It is found in the nucleus. The protein resides in the mitochondrion. The catalysed reaction is ATP + H2O = ADP + phosphate + H(+). The chain is Putative pre-mRNA-splicing factor ATP-dependent RNA helicase DHX32 (Dhx32) from Mus musculus (Mouse).